The sequence spans 155 residues: Protein-export protein SecB (155 aa).

It belongs to the SecB family. Homotetramer, a dimer of dimers. One homotetramer interacts with 1 SecA dimer.

The protein resides in the cytoplasm. Functionally, one of the proteins required for the normal export of preproteins out of the cell cytoplasm. It is a molecular chaperone that binds to a subset of precursor proteins, maintaining them in a translocation-competent state. It also specifically binds to its receptor SecA. This chain is Protein-export protein SecB, found in Vibrio atlanticus (strain LGP32) (Vibrio splendidus (strain Mel32)).